Reading from the N-terminus, the 130-residue chain is Small ribosomal subunit protein uS9 (130 aa).

The protein belongs to the universal ribosomal protein uS9 family.

This Chromobacterium violaceum (strain ATCC 12472 / DSM 30191 / JCM 1249 / CCUG 213 / NBRC 12614 / NCIMB 9131 / NCTC 9757 / MK) protein is Small ribosomal subunit protein uS9.